Reading from the N-terminus, the 519-residue chain is Protein disulfide-isomerase A5 (519 aa).

The signal sequence occupies residues 1–21 (MARAGPAWLLLAIWVVLPSWL). Cystine bridges form between Cys-85-Cys-94, Cys-182-Cys-185, Cys-305-Cys-308, and Cys-426-Cys-429. Thioredoxin domains lie at 134-261 (FLKD…NPQP), 270-384 (PWAD…NPEA), and 378-506 (WMQN…ALRE). A Prevents secretion from ER motif is present at residues 516 to 519 (KEEL).

It belongs to the protein disulfide isomerase family. As to quaternary structure, interacts with CALR (via P-domain).

Its subcellular location is the endoplasmic reticulum lumen. It catalyses the reaction Catalyzes the rearrangement of -S-S- bonds in proteins.. This is Protein disulfide-isomerase A5 (PDIA5) from Homo sapiens (Human).